Consider the following 69-residue polypeptide: DNA gyrase inhibitor YacG (69 aa).

Positions 13, 16, 32, and 36 each coordinate Zn(2+).

The protein belongs to the DNA gyrase inhibitor YacG family. In terms of assembly, interacts with GyrB. Zn(2+) serves as cofactor.

Inhibits all the catalytic activities of DNA gyrase by preventing its interaction with DNA. Acts by binding directly to the C-terminal domain of GyrB, which probably disrupts DNA binding by the gyrase. This chain is DNA gyrase inhibitor YacG, found in Neisseria gonorrhoeae (strain ATCC 700825 / FA 1090).